A 390-amino-acid chain; its full sequence is Ribosomal RNA small subunit methyltransferase H (390 aa).

Residues 47–49 (GGH), aspartate 66, phenylalanine 93, aspartate 122, and glutamine 129 each bind S-adenosyl-L-methionine. The interval 282-390 (SKTPPGLPID…SHREDVEGEQ (109 aa)) is disordered. Basic and acidic residues predominate over residues 305–316 (GSEKADEQENNK). Over residues 348 to 358 (SGSSTTYSARS) the composition is skewed to polar residues. Composition is skewed to basic and acidic residues over residues 360–372 (SRHE…REHL) and 381–390 (SHREDVEGEQ).

Belongs to the methyltransferase superfamily. RsmH family.

Its subcellular location is the cytoplasm. The catalysed reaction is cytidine(1402) in 16S rRNA + S-adenosyl-L-methionine = N(4)-methylcytidine(1402) in 16S rRNA + S-adenosyl-L-homocysteine + H(+). Its function is as follows. Specifically methylates the N4 position of cytidine in position 1402 (C1402) of 16S rRNA. This chain is Ribosomal RNA small subunit methyltransferase H, found in Corynebacterium kroppenstedtii (strain DSM 44385 / JCM 11950 / CIP 105744 / CCUG 35717).